The primary structure comprises 574 residues: Penicillin-binding protein activator LpoA (574 aa).

A signal peptide spans 1–25; sequence MTILLQRAKFKKRLMPILFPLMLAG. C26 carries the N-palmitoyl cysteine lipid modification. The S-diacylglycerol cysteine moiety is linked to residue C26.

This sequence belongs to the LpoA family. Interacts with PBP1a.

The protein resides in the cell outer membrane. Its function is as follows. Regulator of peptidoglycan synthesis that is essential for the function of penicillin-binding protein 1A (PBP1a). This Mannheimia succiniciproducens (strain KCTC 0769BP / MBEL55E) protein is Penicillin-binding protein activator LpoA.